Consider the following 255-residue polypeptide: Na(+)-translocating NADH-quinone reductase subunit C (255 aa).

A helical transmembrane segment spans residues 11–31 (LGVVVGLSLVCSIIVSTAAVG). Thr223 bears the FMN phosphoryl threonine mark.

This sequence belongs to the NqrC family. In terms of assembly, composed of six subunits; NqrA, NqrB, NqrC, NqrD, NqrE and NqrF. It depends on FMN as a cofactor.

It is found in the cell inner membrane. It carries out the reaction a ubiquinone + n Na(+)(in) + NADH + H(+) = a ubiquinol + n Na(+)(out) + NAD(+). Its function is as follows. NQR complex catalyzes the reduction of ubiquinone-1 to ubiquinol by two successive reactions, coupled with the transport of Na(+) ions from the cytoplasm to the periplasm. NqrA to NqrE are probably involved in the second step, the conversion of ubisemiquinone to ubiquinol. This is Na(+)-translocating NADH-quinone reductase subunit C from Vibrio vulnificus (strain CMCP6).